The chain runs to 571 residues: MGNWITSTFLRFDLFQRHQPNRFLEYTRVQHSNQSPAYSVRTAAEIVAHQRMKPNHSNDSDTDFSSDDEGCPKMTPHEEQQMFEREQHIAFSGRCHIGDPESCTQLRNEINSRCGPRPSTSNNMEFILNRDLQKRGTSISNPRTVARVLNSHLPNQKRRVDRVATKSFCTQYIQNGTKIVVASQDEKIRFYQRNPDKSKYRSKYMKSDELRVDQCGWSILDTAISLNGDLIAYGTWKDAVFVGKLDFTERQNITWFPIDLNGEPGRDHCAVFCVKFSDSSEQIVCGTSQYSIHVFDVEQRRRIRTIVNAHEDDVNSVCFADLGSNLIYSAGDDGLVKVWDKRAWSDGDVEPVGVFAGHRDGVTHVDSRQDERYLLSNSKDQTIKVWDLRKFSNMSGVEATRACVQSQHWDYRWQPAPPGLCQPVAGDTSVMTLRGHSVLHTLVRANFSPESTGRRYIYTGCARGEVVVYDIMSGTVSRRLKGHTAVVRECDWHPTENEIVSSAWDGVTTVWTWDERQEGVIAPYDHPNISQFGDEDSCDELFQPVKKQCRRQRKTMSSRGHPCSSSSISQN.

The disordered stretch occupies residues 51 to 75; the sequence is RMKPNHSNDSDTDFSSDDEGCPKMT. The segment covering 60-69 has biased composition (acidic residues); that stretch reads SDTDFSSDDE. WD repeat units lie at residues 162–201, 266–305, 309–349, 357–396, 435–479, and 482–521; these read RVAT…SKYR, RDHC…RIRT, AHED…DGDV, GHRD…NMSG, GHSV…VSRR, and GHTA…EGVI.

It belongs to the WD repeat LEC14B family.

Its function is as follows. Involved in regulation of lifespan. Required for dopaminergic CEP neuron degeneration in response to Mn(2+). Inhibits the skn-1-mediated up-regulation of tatn-1. This is DDB1- and CUL4-associated factor 11 homolog from Caenorhabditis elegans.